A 57-amino-acid polypeptide reads, in one-letter code: Neurotoxin Oh9-1 (57 aa).

Cystine bridges form between C3–C19, C12–C37, C41–C49, and C50–C55.

It belongs to the three-finger toxin family. Short-chain subfamily. Expressed by the venom gland.

It localises to the secreted. Its function is as follows. This toxin binds and inhibits rat muscle adult alpha-1-beta-1-delta-epsilon/CHRNA1-CHRNB1-CHRND-CHRNE (IC(50)=3.1 uM) and fetal alpha-1-beta-1-gamma-delta/CHRNA1-CHRNB1-CHRNG-CHRND (IC(50)=5.6 uM) nicotinic acetylcholine receptors (nAChR). Shows a very low inhibition on rat neuronal alpha-3-beta-2/CHRNA3-CHRNB2 nAChR (IC(50)=50.2 uM) nAChR. Binds to the acetylcholine-binding pocket and acts as a competitive antagonist. Does not inhibit human glycine receptor (homopentamer composed of alpha-1 subunits, GLRA1), but seems to potentiate it (about 2-fold increased activity). The chain is Neurotoxin Oh9-1 from Ophiophagus hannah (King cobra).